We begin with the raw amino-acid sequence, 312 residues long: GDSL esterase/lipase At2g38180 (312 aa).

The first 22 residues, 1-22 (MVGPVRPQIVLFGSSIVQYSFT), serve as a signal peptide directing secretion. Asn79 is a glycosylation site (N-linked (GlcNAc...) asparagine). Residues 285–312 (EPPHPVSLCDHELTQNEQLEPPQPTARL) form a disordered region.

This sequence belongs to the 'GDSL' lipolytic enzyme family.

It is found in the secreted. The sequence is that of GDSL esterase/lipase At2g38180 from Arabidopsis thaliana (Mouse-ear cress).